A 119-amino-acid chain; its full sequence is Mitochondrial coiled-coil domain protein 1 (119 aa).

A mitochondrion-targeting transit peptide spans 1 to 24 (MVLPLPWLSRYHFLRLLLPSWSLA). The tract at residues 25–65 (PQGSHGCCSQNPKASMEEQTSSRGNGKMTSPPRGPGTHRTA) is disordered. The span at 31-52 (CCSQNPKASMEEQTSSRGNGKM) shows a compositional bias: polar residues. Residues 62 to 116 (HRTAELARAEELLEQQLELYQALLEGQEGAWEAQALVLKIQKLKEQMRRHQESLG) adopt a coiled-coil conformation.

As to expression, widely expressed. Expressed in adult and fetal liver, kidney and lung. Expressed in fetal brain. Weakly expressed in fetal spleen.

Its subcellular location is the mitochondrion. The polypeptide is Mitochondrial coiled-coil domain protein 1 (MCCD1) (Homo sapiens (Human)).